The sequence spans 128 residues: MFPSIVAIFVGAGLGAVLRWFLGLALNAFVPAMPLGTLAANLLGGYAIGIAAVVFTSRVGLPPEWRLFVITGFLGGLTTFSTYSVEVMTHALQGEFGWAFAVAVLHLTGSFTLTALGMWTASAWFAPA.

A run of 4 helical transmembrane segments spans residues 5-25, 35-55, 67-87, and 96-116; these read IVAIFVGAGLGAVLRWFLGLA, LGTLAANLLGGYAIGIAAVVF, LFVITGFLGGLTTFSTYSVEV, and FGWAFAVAVLHLTGSFTLTAL. 2 residues coordinate Na(+): glycine 75 and threonine 78.

It belongs to the fluoride channel Fluc/FEX (TC 1.A.43) family.

The protein resides in the cell inner membrane. The catalysed reaction is fluoride(in) = fluoride(out). With respect to regulation, na(+) is not transported, but it plays an essential structural role and its presence is essential for fluoride channel function. In terms of biological role, fluoride-specific ion channel. Important for reducing fluoride concentration in the cell, thus reducing its toxicity. This chain is Fluoride-specific ion channel FluC, found in Burkholderia vietnamiensis (strain G4 / LMG 22486) (Burkholderia cepacia (strain R1808)).